The following is a 331-amino-acid chain: Ketol-acid reductoisomerase (NADP(+)) (331 aa).

One can recognise a KARI N-terminal Rossmann domain in the interval 2–182 (ARMYYDEDAN…GGTRAGVLET (181 aa)). NADP(+) contacts are provided by residues 25–28 (YGSQ), Ser-51, Ser-53, and 83–86 (DEVQ). Residue His-108 is part of the active site. Gly-134 provides a ligand contact to NADP(+). In terms of domain architecture, KARI C-terminal knotted spans 183–328 (TFREETETDL…KDLRAMFSWL (146 aa)). Mg(2+)-binding residues include Asp-191, Glu-195, Glu-227, and Glu-231. Substrate is bound at residue Ser-252.

Belongs to the ketol-acid reductoisomerase family. Mg(2+) serves as cofactor.

The enzyme catalyses (2R)-2,3-dihydroxy-3-methylbutanoate + NADP(+) = (2S)-2-acetolactate + NADPH + H(+). The catalysed reaction is (2R,3R)-2,3-dihydroxy-3-methylpentanoate + NADP(+) = (S)-2-ethyl-2-hydroxy-3-oxobutanoate + NADPH + H(+). It participates in amino-acid biosynthesis; L-isoleucine biosynthesis; L-isoleucine from 2-oxobutanoate: step 2/4. The protein operates within amino-acid biosynthesis; L-valine biosynthesis; L-valine from pyruvate: step 2/4. In terms of biological role, involved in the biosynthesis of branched-chain amino acids (BCAA). Catalyzes an alkyl-migration followed by a ketol-acid reduction of (S)-2-acetolactate (S2AL) to yield (R)-2,3-dihydroxy-isovalerate. In the isomerase reaction, S2AL is rearranged via a Mg-dependent methyl migration to produce 3-hydroxy-3-methyl-2-ketobutyrate (HMKB). In the reductase reaction, this 2-ketoacid undergoes a metal-dependent reduction by NADPH to yield (R)-2,3-dihydroxy-isovalerate. The polypeptide is Ketol-acid reductoisomerase (NADP(+)) (Nostoc punctiforme (strain ATCC 29133 / PCC 73102)).